The following is a 199-amino-acid chain: V-type proton ATPase subunit E (199 aa).

The protein belongs to the V-ATPase E subunit family.

Its function is as follows. Produces ATP from ADP in the presence of a proton gradient across the membrane. This chain is V-type proton ATPase subunit E, found in Clostridium botulinum (strain Loch Maree / Type A3).